The chain runs to 128 residues: MIVRTLDECRDSERRVASETWESVRMLLKNDNMGFSFHITTIYQDTETHIHYKNHLESVYCMSGEGEIEVIGGETYPIKPGTLYILDKHDEHYLRAYKDKEMVMACVFNPPITGTEVHDENGVYPVLD.

It belongs to the ectoine synthase family.

The enzyme catalyses (2S)-4-acetamido-2-aminobutanoate = L-ectoine + H2O. It functions in the pathway amine and polyamine biosynthesis; ectoine biosynthesis; L-ectoine from L-aspartate 4-semialdehyde: step 3/3. Functionally, catalyzes the circularization of gamma-N-acetyl-alpha,gamma-diaminobutyric acid (ADABA) to ectoine (1,4,5,6-tetrahydro-2-methyl-4-pyrimidine carboxylic acid), which is an excellent osmoprotectant. This Aliivibrio fischeri (strain MJ11) (Vibrio fischeri) protein is L-ectoine synthase.